The sequence spans 270 residues: Sulfur carrier protein FdhD (270 aa).

The active-site Cysteine persulfide intermediate is cysteine 116. 253 to 258 is a Mo-bis(molybdopterin guanine dinucleotide) binding site; sequence FAREGK.

The protein belongs to the FdhD family.

Its subcellular location is the cytoplasm. Required for formate dehydrogenase (FDH) activity. Acts as a sulfur carrier protein that transfers sulfur from IscS to the molybdenum cofactor prior to its insertion into FDH. The chain is Sulfur carrier protein FdhD from Haemophilus influenzae (strain 86-028NP).